Here is a 510-residue protein sequence, read N- to C-terminus: Putative folylpolyglutamate synthase (510 aa).

98 to 101 is an ATP binding site; the sequence is GKGS. 3 residues coordinate Mg(2+): Ser-122, Glu-189, and His-217. Arg-342 and Asp-357 together coordinate ATP.

Belongs to the folylpolyglutamate synthase family. The cofactor is a monovalent cation.

The protein localises to the mitochondrion inner membrane. The protein resides in the mitochondrion matrix. Its subcellular location is the cytoplasm. It catalyses the reaction (6S)-5,6,7,8-tetrahydrofolyl-(gamma-L-Glu)(n) + L-glutamate + ATP = (6S)-5,6,7,8-tetrahydrofolyl-(gamma-L-Glu)(n+1) + ADP + phosphate + H(+). It functions in the pathway cofactor biosynthesis; tetrahydrofolylpolyglutamate biosynthesis. Catalyzes conversion of folates to polyglutamate derivatives allowing concentration of folate compounds in the cell and the intracellular retention of these cofactors, which are important substrates for most of the folate-dependent enzymes that are involved in one-carbon transfer reactions involved in purine, pyrimidine and amino acid synthesis. The chain is Putative folylpolyglutamate synthase from Caenorhabditis elegans.